The primary structure comprises 513 residues: uncharacterized protein (513 aa).

A TRAM domain is found at 3 to 61 (NLKIGQKLQLEIERMGINGEGIGVISGRLVFIPYALPGEEVLVEITENARNFSRAKLVK). Positions 309, 338, 359, and 407 each coordinate S-adenosyl-L-methionine. The Nucleophile role is filled by C434.

The protein belongs to the class I-like SAM-binding methyltransferase superfamily. RNA M5U methyltransferase family.

This is an uncharacterized protein from Lactococcus lactis subsp. lactis (strain IL1403) (Streptococcus lactis).